Here is a 397-residue protein sequence, read N- to C-terminus: Acetate kinase (397 aa).

Asparagine 8 is a binding site for Mg(2+). Lysine 15 is a binding site for ATP. Residue arginine 89 coordinates substrate. Aspartate 146 (proton donor/acceptor) is an active-site residue. ATP is bound by residues 206–210, 283–285, and 331–335; these read HVGNG, DMR, and GIGEN. Mg(2+) is bound at residue glutamate 383.

Belongs to the acetokinase family. In terms of assembly, homodimer. Mg(2+) serves as cofactor. Requires Mn(2+) as cofactor.

The protein localises to the cytoplasm. It catalyses the reaction acetate + ATP = acetyl phosphate + ADP. It participates in metabolic intermediate biosynthesis; acetyl-CoA biosynthesis; acetyl-CoA from acetate: step 1/2. Catalyzes the formation of acetyl phosphate from acetate and ATP. Can also catalyze the reverse reaction. This is Acetate kinase from Streptococcus thermophilus (strain ATCC BAA-491 / LMD-9).